Here is a 157-residue protein sequence, read N- to C-terminus: Ribosome maturation factor RimP (157 aa).

It belongs to the RimP family.

The protein resides in the cytoplasm. In terms of biological role, required for maturation of 30S ribosomal subunits. In Lactococcus lactis subsp. cremoris (strain MG1363), this protein is Ribosome maturation factor RimP.